A 1241-amino-acid chain; its full sequence is Dinoflagellate luciferase (1241 aa).

3 luciferase regions span residues 114 to 465 (KTGL…IKRD), 491 to 842 (DQGF…TKRD), and 868 to 1218 (EKGF…KKRD).

It belongs to the calycin superfamily. Luciferase family.

The protein resides in the cytoplasmic vesicle. It carries out the reaction dinoflagellate luciferin + O2 = oxidized dinoflagellate luciferin + hnu + H2O + H(+). With respect to regulation, regulated by pH: upon acidification, at a pH of 6.3, dinoflagellate luciferin is released from luciferin-binding protein LBP, allowing the interaction between Dinoflagellate luciferase and its substrate luciferin. Emits blue light flashes with a wavelength of 475 nm during the night phase. This chain is Dinoflagellate luciferase, found in Lingulodinium polyedra (Dinoflagellate).